Here is a 137-residue protein sequence, read N- to C-terminus: Glutamate mutase sigma subunit (137 aa).

In terms of domain architecture, B12-binding spans 3 to 137 (KKTIVLGVIG…ADLKKDLNIE (135 aa)). Adenosylcob(III)alamin is bound by residues 13-17 (SDCHA), H16, 61-63 (SSL), and 93-97 (NIVVG).

This sequence belongs to the methylaspartate mutase GlmS subunit family. Heterotetramer composed of 2 epsilon subunits (GlmE) and 2 sigma subunits (GlmS). GlmE exists as a homodimer and GlmS as a monomer. Requires adenosylcob(III)alamin as cofactor.

The enzyme catalyses (2S,3S)-3-methyl-L-aspartate = L-glutamate. Its pathway is amino-acid degradation; L-glutamate degradation via mesaconate pathway; acetate and pyruvate from L-glutamate: step 1/4. Competitively inhibited by (2S,4S)-4-fluoroglutamate, 2-methyleneglutarate, (2R,3RS)-3-fluoroglutamate and (S)-3-methylitaconate. Its function is as follows. Catalyzes the carbon skeleton rearrangement of L-glutamate to L-threo-3-methylaspartate ((2S,3S)-3-methylaspartate). The chain is Glutamate mutase sigma subunit from Clostridium cochlearium.